Here is a 251-residue protein sequence, read N- to C-terminus: Triosephosphate isomerase (251 aa).

Asn9–Lys11 serves as a coordination point for substrate. Residue His95 is the Electrophile of the active site. Glu167 serves as the catalytic Proton acceptor. Substrate is bound by residues Gly173, Ser213, and Gly234–Gly235.

This sequence belongs to the triosephosphate isomerase family. In terms of assembly, homodimer.

It is found in the cytoplasm. The enzyme catalyses D-glyceraldehyde 3-phosphate = dihydroxyacetone phosphate. Its pathway is carbohydrate biosynthesis; gluconeogenesis. The protein operates within carbohydrate degradation; glycolysis; D-glyceraldehyde 3-phosphate from glycerone phosphate: step 1/1. Functionally, involved in the gluconeogenesis. Catalyzes stereospecifically the conversion of dihydroxyacetone phosphate (DHAP) to D-glyceraldehyde-3-phosphate (G3P). The polypeptide is Triosephosphate isomerase (Pediococcus pentosaceus (strain ATCC 25745 / CCUG 21536 / LMG 10740 / 183-1w)).